The following is a 424-amino-acid chain: Cuticlin-1 (424 aa).

Positions 1-18 are cleaved as a signal peptide; it reads MTWKPIICLAALVLSASA. Residues 19–392 lie on the Extracellular side of the membrane; the sequence is IPVDNNVEGE…ATSTGICLTP (374 aa). In terms of domain architecture, ZP spans 32-277; that stretch reads ECGPNSITVN…PTCSEPQGFG (246 aa). Cysteine 197 and cysteine 252 are oxidised to a cystine. 4 repeat units span residues 302 to 305, 307 to 311, 312 to 315, and 320 to 323. The 4 X 4 AA repeats of A-A-P-[AVI] stretch occupies residues 302-323; the sequence is AAPVAAAAPVAAPVAAAAAAPA. A helical transmembrane segment spans residues 393 to 413; that stretch reads IGFASFLGIGTIVATALSATI. The Cytoplasmic segment spans residues 414 to 424; sequence FYVARPTSHKH.

The protein resides in the cell membrane. It is found in the secreted. Functionally, component of the cuticles, which contributes to the formation of extracellular envelopes protecting the organism from the environment. Plays a role in alae formation in dauer larvae. The polypeptide is Cuticlin-1 (Caenorhabditis elegans).